The primary structure comprises 311 residues: Porphobilinogen deaminase (311 aa).

An S-(dipyrrolylmethanemethyl)cysteine modification is found at Cys-240.

This sequence belongs to the HMBS family. In terms of assembly, monomer. Requires dipyrromethane as cofactor.

The enzyme catalyses 4 porphobilinogen + H2O = hydroxymethylbilane + 4 NH4(+). The protein operates within porphyrin-containing compound metabolism; protoporphyrin-IX biosynthesis; coproporphyrinogen-III from 5-aminolevulinate: step 2/4. Functionally, tetrapolymerization of the monopyrrole PBG into the hydroxymethylbilane pre-uroporphyrinogen in several discrete steps. This is Porphobilinogen deaminase from Natranaerobius thermophilus (strain ATCC BAA-1301 / DSM 18059 / JW/NM-WN-LF).